Reading from the N-terminus, the 287-residue chain is Bifunctional protein FolD 1 (287 aa).

NADP(+) contacts are provided by residues 170–172 (GRS) and Ser195.

The protein belongs to the tetrahydrofolate dehydrogenase/cyclohydrolase family. In terms of assembly, homodimer.

The enzyme catalyses (6R)-5,10-methylene-5,6,7,8-tetrahydrofolate + NADP(+) = (6R)-5,10-methenyltetrahydrofolate + NADPH. It carries out the reaction (6R)-5,10-methenyltetrahydrofolate + H2O = (6R)-10-formyltetrahydrofolate + H(+). The protein operates within one-carbon metabolism; tetrahydrofolate interconversion. In terms of biological role, catalyzes the oxidation of 5,10-methylenetetrahydrofolate to 5,10-methenyltetrahydrofolate and then the hydrolysis of 5,10-methenyltetrahydrofolate to 10-formyltetrahydrofolate. The protein is Bifunctional protein FolD 1 of Streptomyces avermitilis (strain ATCC 31267 / DSM 46492 / JCM 5070 / NBRC 14893 / NCIMB 12804 / NRRL 8165 / MA-4680).